Consider the following 626-residue polypeptide: Chaperone protein HtpG (626 aa).

Residues 1–341 (MIKKEFKAES…SEDLSLNISR (341 aa)) form an a; substrate-binding region. The tract at residues 342 to 552 (EMLQHDRQLK…DGDVTIEMEK (211 aa)) is b. The c stretch occupies residues 553-626 (ILSAMPNNQE…FTNDICKLMS (74 aa)).

Belongs to the heat shock protein 90 family. As to quaternary structure, homodimer.

The protein resides in the cytoplasm. Molecular chaperone. Has ATPase activity. The sequence is that of Chaperone protein HtpG from Alkaliphilus metalliredigens (strain QYMF).